We begin with the raw amino-acid sequence, 266 residues long: Undecaprenyl-diphosphatase (266 aa).

A run of 8 helical transmembrane segments spans residues 1–21 (MDTF…FLPI), 39–59 (QGLS…VMYF), 87–107 (WWII…KDFI), 115–135 (AVIA…DRMF), 144–164 (VGWK…IPGT), 183–203 (AAAR…AILV), 218–238 (ALSL…HLFL), and 246–266 (MTPF…FMFA).

It belongs to the UppP family.

Its subcellular location is the cell inner membrane. It carries out the reaction di-trans,octa-cis-undecaprenyl diphosphate + H2O = di-trans,octa-cis-undecaprenyl phosphate + phosphate + H(+). Catalyzes the dephosphorylation of undecaprenyl diphosphate (UPP). Confers resistance to bacitracin. The chain is Undecaprenyl-diphosphatase from Shewanella sediminis (strain HAW-EB3).